A 206-amino-acid polypeptide reads, in one-letter code: Dephospho-CoA kinase (206 aa).

The DPCK domain occupies 4 to 200 (TVALTGGIGS…ASYLKLASQF (197 aa)). 12–17 (GSGKST) lines the ATP pocket.

Belongs to the CoaE family.

Its subcellular location is the cytoplasm. It catalyses the reaction 3'-dephospho-CoA + ATP = ADP + CoA + H(+). Its pathway is cofactor biosynthesis; coenzyme A biosynthesis; CoA from (R)-pantothenate: step 5/5. Its function is as follows. Catalyzes the phosphorylation of the 3'-hydroxyl group of dephosphocoenzyme A to form coenzyme A. The chain is Dephospho-CoA kinase from Salmonella paratyphi A (strain ATCC 9150 / SARB42).